Reading from the N-terminus, the 721-residue chain is Polyribonucleotide nucleotidyltransferase (721 aa).

Mg(2+) contacts are provided by Asp-495 and Asp-501. A KH domain is found at 562–621; that stretch reads PRLLSFRIDPELIGTVIGPGGRTIKGITERTNTKIDIEDSGIVTIASHDGAAADEAQKII. The region spanning 631–699 is the S1 motif domain; it reads GEVFSGSITR…NRGRINLTLR (69 aa). Positions 698 to 721 are disordered; the sequence is LRGVPQSGDGAGEEPQPTPVAPLS.

The protein belongs to the polyribonucleotide nucleotidyltransferase family. The cofactor is Mg(2+).

The protein resides in the cytoplasm. The catalysed reaction is RNA(n+1) + phosphate = RNA(n) + a ribonucleoside 5'-diphosphate. Functionally, involved in mRNA degradation. Catalyzes the phosphorolysis of single-stranded polyribonucleotides processively in the 3'- to 5'-direction. The polypeptide is Polyribonucleotide nucleotidyltransferase (Parasynechococcus marenigrum (strain WH8102)).